The chain runs to 662 residues: 72 kDa type IV collagenase (662 aa).

A signal peptide spans 1–29 (MEARVAWGALAGPLRVLCVLCCLLGRAIA). A propeptide spans 30-109 (APSPIIKFPG…PRCGNPDVAN (80 aa)) (activation peptide). The Cysteine switch motif lies at 100 to 107 (PRCGNPDV). A Zn(2+)-binding site is contributed by Cys-102. A collagenase-like 1 region spans residues 110–221 (YNFFPRKPKW…LWTLGEGQVV (112 aa)). Positions 134 and 168 each coordinate Ca(2+). Residues His-178 and Asp-180 each contribute to the Zn(2+) site. Asp-185 and Gly-186 together coordinate Ca(2+). A Zn(2+)-binding site is contributed by His-193. Gly-200, Gly-202, and Asp-204 together coordinate Ca(2+). His-206 contributes to the Zn(2+) binding site. Asp-208, Asp-209, and Glu-211 together coordinate Ca(2+). The segment at 222 to 396 (RVKYGNADGE…WGFCPDQGYS (175 aa)) is collagen-binding. Fibronectin type-II domains follow at residues 228–276 (ADGE…FCPH), 286–334 (ADGQ…FCPE), and 344–392 (SEGA…FCPD). Disulfide bonds link Cys-233/Cys-259, Cys-247/Cys-274, Cys-291/Cys-317, Cys-305/Cys-332, Cys-349/Cys-375, and Cys-363/Cys-390. Residues 397-467 (LFLVAAHEFG…GPTPTLGPVT (71 aa)) form a collagenase-like 2 region. His-403 contributes to the Zn(2+) binding site. The active site involves Glu-404. The Zn(2+) site is built by His-407 and His-413. The interval 414 to 662 (SQDPGALMAP…GSIKSDWLGC (249 aa)) is required for inhibitor TIMP2 binding. A disordered region spans residues 446–465 (GPSPDADTDTGTGPTPTLGP). An intrachain disulfide couples Cys-471 to Cys-662. Hemopexin repeat units follow at residues 474–518 (DIVF…WPEL), 519–565 (PEKI…GLPP), 567–615 (VQQV…WNAI), and 616–662 (PDNL…WLGC). Ca(2+) is bound by residues Asp-478, Asp-523, and Asp-571. Residue Asn-575 is glycosylated (N-linked (GlcNAc...) asparagine). Asp-620 contributes to the Ca(2+) binding site. Asn-644 carries N-linked (GlcNAc...) asparagine glycosylation.

Belongs to the peptidase M10A family. Interacts (via the C-terminal hemopexin-like domains-containing region) with the integrin alpha-V/beta-3; the interaction promotes vascular invasion in angiogenic vessels and melamoma cells. Interacts (via the C-terminal PEX domain) with TIMP2 (via the C-terminal); the interaction inhibits the degradation activity. Interacts with GSK3B. The cofactor is Ca(2+). Zn(2+) serves as cofactor. In terms of processing, phosphorylation on multiple sites modulates enzymatic activity. Phosphorylated by PKC in vitro. Post-translationally, the propeptide is processed by MMP14 (MT-MMP1) and MMP16 (MT-MMP3). Autocatalytic cleavage in the C-terminal produces the anti-angiogenic peptide, PEX. This processing appears to be facilitated by binding integrinv/beta3.

The protein resides in the secreted. It localises to the extracellular space. Its subcellular location is the extracellular matrix. The protein localises to the membrane. It is found in the nucleus. The protein resides in the cytoplasm. It localises to the mitochondrion. It catalyses the reaction Cleavage of gelatin type I and collagen types IV, V, VII, X. Cleaves the collagen-like sequence Pro-Gln-Gly-|-Ile-Ala-Gly-Gln.. Its function is as follows. Ubiquitinous metalloproteinase that is involved in diverse functions such as remodeling of the vasculature, angiogenesis, tissue repair, tumor invasion, inflammation, and atherosclerotic plaque rupture. As well as degrading extracellular matrix proteins, can also act on several nonmatrix proteins such as big endothelial 1 and beta-type CGRP promoting vasoconstriction. Also cleaves KISS at a Gly-|-Leu bond. Appears to have a role in myocardial cell death pathways. Contributes to myocardial oxidative stress by regulating the activity of GSK3beta. Cleaves GSK3beta in vitro. Involved in the formation of the fibrovascular tissues. PEX, the C-terminal non-catalytic fragment of MMP2, possesses anti-angiogenic and anti-tumor properties and inhibits cell migration and cell adhesion to FGF2 and vitronectin. Ligand for integrin alpha-v/beta-3 on the surface of blood vessels. In terms of biological role, mediates the proteolysis of CHUK/IKKA and initiates a primary innate immune response by inducing mitochondrial-nuclear stress signaling with activation of the pro-inflammatory NF-kappaB, NFAT and IRF transcriptional pathways. The protein is 72 kDa type IV collagenase (Mmp2) of Mus musculus (Mouse).